The primary structure comprises 404 residues: 2,3-diketo-5-methylthiopentyl-1-phosphate enolase (404 aa).

Lys91 functions as the Proton acceptor in the catalytic mechanism. Substrate contacts are provided by residues Lys140, 166 to 169, His257, Gly329, and 351 to 352; these read KDDE and GG. Residues Lys166, Asp168, and Glu169 each contribute to the Mg(2+) site. The residue at position 166 (Lys166) is an N6-carboxylysine.

Belongs to the RuBisCO large chain family. Type IV subfamily. Homodimer. It depends on Mg(2+) as a cofactor.

The enzyme catalyses 5-methylsulfanyl-2,3-dioxopentyl phosphate = 2-hydroxy-5-methylsulfanyl-3-oxopent-1-enyl phosphate. It participates in amino-acid biosynthesis; L-methionine biosynthesis via salvage pathway; L-methionine from S-methyl-5-thio-alpha-D-ribose 1-phosphate: step 3/6. In terms of biological role, catalyzes the enolization of 2,3-diketo-5-methylthiopentyl-1-phosphate (DK-MTP-1-P) into 2-hydroxy-3-keto-5-methylthiopentenyl-1-phosphate (HK-MTPenyl-1-P). The polypeptide is 2,3-diketo-5-methylthiopentyl-1-phosphate enolase (Bacillus velezensis (strain DSM 23117 / BGSC 10A6 / LMG 26770 / FZB42) (Bacillus amyloliquefaciens subsp. plantarum)).